Consider the following 388-residue polypeptide: Succinate--CoA ligase [ADP-forming] subunit beta (388 aa).

In terms of domain architecture, ATP-grasp spans 9-243 (KQLFHRYGIP…ESQLAPLEVR (235 aa)). Residues K45, 52-54 (GRG), E98, V101, and E106 contribute to the ATP site. Mg(2+) contacts are provided by N198 and D212. Residues N263 and 320–322 (GIM) contribute to the substrate site.

Belongs to the succinate/malate CoA ligase beta subunit family. As to quaternary structure, heterotetramer of two alpha and two beta subunits. Mg(2+) serves as cofactor.

It carries out the reaction succinate + ATP + CoA = succinyl-CoA + ADP + phosphate. The catalysed reaction is GTP + succinate + CoA = succinyl-CoA + GDP + phosphate. It participates in carbohydrate metabolism; tricarboxylic acid cycle; succinate from succinyl-CoA (ligase route): step 1/1. In terms of biological role, succinyl-CoA synthetase functions in the citric acid cycle (TCA), coupling the hydrolysis of succinyl-CoA to the synthesis of either ATP or GTP and thus represents the only step of substrate-level phosphorylation in the TCA. The beta subunit provides nucleotide specificity of the enzyme and binds the substrate succinate, while the binding sites for coenzyme A and phosphate are found in the alpha subunit. The sequence is that of Succinate--CoA ligase [ADP-forming] subunit beta from Syntrophotalea carbinolica (strain DSM 2380 / NBRC 103641 / GraBd1) (Pelobacter carbinolicus).